The sequence spans 366 residues: Cytochrome c peroxidase, mitochondrial (366 aa).

His-123 (proton acceptor) is an active-site residue. The segment covering 195 to 206 has biased composition (basic and acidic residues); the sequence is IEWRPGRVDDNT. Residues 195-218 are disordered; that stretch reads IEWRPGRVDDNTASKVPPNGRLPD. A heme b-binding site is contributed by His-247. Trp-263 functions as the Tryptophan radical intermediate in the catalytic mechanism.

It belongs to the peroxidase family. Cytochrome c peroxidase subfamily. In terms of assembly, forms a one-to-one complex with cytochrome c. Requires heme b as cofactor.

The protein resides in the mitochondrion matrix. The protein localises to the mitochondrion intermembrane space. The enzyme catalyses 2 Fe(II)-[cytochrome c] + H2O2 + 2 H(+) = 2 Fe(III)-[cytochrome c] + 2 H2O. In terms of biological role, destroys radicals which are normally produced within the cells and which are toxic to biological systems. The sequence is that of Cytochrome c peroxidase, mitochondrial (CCP1) from Candida albicans (strain SC5314 / ATCC MYA-2876) (Yeast).